A 159-amino-acid chain; its full sequence is NAD(P)H-quinone oxidoreductase subunit J, chloroplastic (159 aa).

It belongs to the complex I 30 kDa subunit family. NDH is composed of at least 16 different subunits, 5 of which are encoded in the nucleus.

The protein localises to the plastid. Its subcellular location is the chloroplast thylakoid membrane. It catalyses the reaction a plastoquinone + NADH + (n+1) H(+)(in) = a plastoquinol + NAD(+) + n H(+)(out). The catalysed reaction is a plastoquinone + NADPH + (n+1) H(+)(in) = a plastoquinol + NADP(+) + n H(+)(out). NDH shuttles electrons from NAD(P)H:plastoquinone, via FMN and iron-sulfur (Fe-S) centers, to quinones in the photosynthetic chain and possibly in a chloroplast respiratory chain. The immediate electron acceptor for the enzyme in this species is believed to be plastoquinone. Couples the redox reaction to proton translocation, and thus conserves the redox energy in a proton gradient. This Agrostis stolonifera (Creeping bentgrass) protein is NAD(P)H-quinone oxidoreductase subunit J, chloroplastic.